The chain runs to 303 residues: MLTFQQIILTLQDYWDKQGCALLQPYDMEVGAGTSHTATFLRAIGPEPWRAAYVQPSRRPKDGRYGENPNRLQHYYQYQVVLKPAPPEILDLYIGSLKALGIDPTQHDIRFVEDDWENPTLGAWGLGWEVWLNGMEVTQFTYFQQVGGLDCTPTTGEITYGLERLAMYLQDVESVYDLVWTEGANGNRVYYRDVFHQNEVEQSTYNFEHASADMLFAHFNDYEAEAKRLMDVPLALPAYEAALKAAHTFNMLDARGAISVTERAAYIGRIRNLSRAVAQAYYDSRERLGFPMLAGRKAAGEAA.

Belongs to the class-II aminoacyl-tRNA synthetase family. Tetramer of two alpha and two beta subunits.

It is found in the cytoplasm. The enzyme catalyses tRNA(Gly) + glycine + ATP = glycyl-tRNA(Gly) + AMP + diphosphate. The chain is Glycine--tRNA ligase alpha subunit from Bordetella pertussis (strain Tohama I / ATCC BAA-589 / NCTC 13251).